A 248-amino-acid chain; its full sequence is Pulmonary surfactant-associated protein A (248 aa).

Positions 1-20 (MWLCPLALTLTLMAASGAAC) are cleaved as a signal peptide. In terms of domain architecture, Collagen-like spans 31–100 (GIPGTPGSHG…PGERGPPGLP (70 aa)). The interval 33–100 (PGTPGSHGLP…PGERGPPGLP (68 aa)) is disordered. A compositionally biased stretch (basic and acidic residues) spans 42–51 (PGRDGRDGVK). Residues 54-65 (PGPPGPMGPPGD) show a composition bias toward pro residues. Residues 134-247 (IGGKVFSTNG…CLYNRLTICE (114 aa)) enclose the C-type lectin domain. 2 cysteine pairs are disulfide-bonded: cysteine 155-cysteine 246 and cysteine 224-cysteine 238. Asparagine 207 carries N-linked (GlcNAc...) asparagine glycosylation. Positions 215, 217, 234, and 235 each coordinate Ca(2+).

Belongs to the SFTPA family. Oligomeric complex of 6 set of homotrimers.

The protein resides in the secreted. Its subcellular location is the extracellular space. It is found in the extracellular matrix. It localises to the surface film. Its function is as follows. In presence of calcium ions, it binds to surfactant phospholipids and contributes to lower the surface tension at the air-liquid interface in the alveoli of the mammalian lung and is essential for normal respiration. Enhances the expression of MYO18A/SP-R210 on alveolar macrophages. The protein is Pulmonary surfactant-associated protein A (SFTPA1) of Macaca mulatta (Rhesus macaque).